A 146-amino-acid chain; its full sequence is 3-hydroxyacyl-[acyl-carrier-protein] dehydratase FabZ (146 aa).

His-48 is an active-site residue.

It belongs to the thioester dehydratase family. FabZ subfamily.

It localises to the cytoplasm. It carries out the reaction a (3R)-hydroxyacyl-[ACP] = a (2E)-enoyl-[ACP] + H2O. Involved in unsaturated fatty acids biosynthesis. Catalyzes the dehydration of short chain beta-hydroxyacyl-ACPs and long chain saturated and unsaturated beta-hydroxyacyl-ACPs. In Acetivibrio thermocellus (strain ATCC 27405 / DSM 1237 / JCM 9322 / NBRC 103400 / NCIMB 10682 / NRRL B-4536 / VPI 7372) (Clostridium thermocellum), this protein is 3-hydroxyacyl-[acyl-carrier-protein] dehydratase FabZ.